The following is a 186-amino-acid chain: Adenine phosphoribosyltransferase (186 aa).

It belongs to the purine/pyrimidine phosphoribosyltransferase family. In terms of assembly, homodimer.

It is found in the cytoplasm. It catalyses the reaction AMP + diphosphate = 5-phospho-alpha-D-ribose 1-diphosphate + adenine. The protein operates within purine metabolism; AMP biosynthesis via salvage pathway; AMP from adenine: step 1/1. In terms of biological role, catalyzes a salvage reaction resulting in the formation of AMP, that is energically less costly than de novo synthesis. In Xanthomonas oryzae pv. oryzae (strain MAFF 311018), this protein is Adenine phosphoribosyltransferase.